A 60-amino-acid chain; its full sequence is Large ribosomal subunit protein bL32 (60 aa).

It belongs to the bacterial ribosomal protein bL32 family.

The polypeptide is Large ribosomal subunit protein bL32 (Synechococcus sp. (strain JA-3-3Ab) (Cyanobacteria bacterium Yellowstone A-Prime)).